The chain runs to 215 residues: Chaperone protein TorD (215 aa).

The protein belongs to the TorD/DmsD family. TorD subfamily.

Its subcellular location is the cytoplasm. Involved in the biogenesis of TorA. Acts on TorA before the insertion of the molybdenum cofactor and, as a result, probably favors a conformation of the apoenzyme that is competent for acquiring the cofactor. The polypeptide is Chaperone protein TorD (Vibrio atlanticus (strain LGP32) (Vibrio splendidus (strain Mel32))).